Here is a 518-residue protein sequence, read N- to C-terminus: Ribonuclease Y (518 aa).

A helical membrane pass occupies residues 2 to 22 (GSIIISALLALVIGAVVGFFV). The KH domain maps to 208–271 (TVSVVNLPND…ETARIALDKL (64 aa)). The 94-residue stretch at 334–427 (VLKHSVEVAF…VAAADALSAA (94 aa)) folds into the HD domain.

Belongs to the RNase Y family.

It is found in the cell membrane. Its function is as follows. Endoribonuclease that initiates mRNA decay. The protein is Ribonuclease Y of Geobacillus thermodenitrificans (strain NG80-2).